The following is a 193-amino-acid chain: Holliday junction branch migration complex subunit RuvA (193 aa).

A domain I region spans residues 1 to 64 (MIGRIAGTLI…EDAHLLYGFG (64 aa)). Positions 65–143 (SAAERNTFRE…AELGHAPGAA (79 aa)) are domain II. Positions 144-151 (PVHDSAVD) are flexible linker. Positions 151–193 (DILNALLALGYSEKEAATAIKQVPAGTGVSDGIKLALKALSKA) are domain III.

The protein belongs to the RuvA family. Homotetramer. Forms an RuvA(8)-RuvB(12)-Holliday junction (HJ) complex. HJ DNA is sandwiched between 2 RuvA tetramers; dsDNA enters through RuvA and exits via RuvB. An RuvB hexamer assembles on each DNA strand where it exits the tetramer. Each RuvB hexamer is contacted by two RuvA subunits (via domain III) on 2 adjacent RuvB subunits; this complex drives branch migration. In the full resolvosome a probable DNA-RuvA(4)-RuvB(12)-RuvC(2) complex forms which resolves the HJ.

Its subcellular location is the cytoplasm. In terms of biological role, the RuvA-RuvB-RuvC complex processes Holliday junction (HJ) DNA during genetic recombination and DNA repair, while the RuvA-RuvB complex plays an important role in the rescue of blocked DNA replication forks via replication fork reversal (RFR). RuvA specifically binds to HJ cruciform DNA, conferring on it an open structure. The RuvB hexamer acts as an ATP-dependent pump, pulling dsDNA into and through the RuvAB complex. HJ branch migration allows RuvC to scan DNA until it finds its consensus sequence, where it cleaves and resolves the cruciform DNA. In Cupriavidus pinatubonensis (strain JMP 134 / LMG 1197) (Cupriavidus necator (strain JMP 134)), this protein is Holliday junction branch migration complex subunit RuvA.